The following is a 573-amino-acid chain: Proline--tRNA ligase (573 aa).

This sequence belongs to the class-II aminoacyl-tRNA synthetase family. ProS type 1 subfamily. Homodimer.

It is found in the cytoplasm. The enzyme catalyses tRNA(Pro) + L-proline + ATP = L-prolyl-tRNA(Pro) + AMP + diphosphate. Functionally, catalyzes the attachment of proline to tRNA(Pro) in a two-step reaction: proline is first activated by ATP to form Pro-AMP and then transferred to the acceptor end of tRNA(Pro). As ProRS can inadvertently accommodate and process non-cognate amino acids such as alanine and cysteine, to avoid such errors it has two additional distinct editing activities against alanine. One activity is designated as 'pretransfer' editing and involves the tRNA(Pro)-independent hydrolysis of activated Ala-AMP. The other activity is designated 'posttransfer' editing and involves deacylation of mischarged Ala-tRNA(Pro). The misacylated Cys-tRNA(Pro) is not edited by ProRS. This Moorella thermoacetica (strain ATCC 39073 / JCM 9320) protein is Proline--tRNA ligase.